The following is a 927-amino-acid chain: Heat shock protein hsp98 (927 aa).

One can recognise a Clp R domain in the interval 2 to 162 (TSKMEFTDRA…TDAIQAIRGT (161 aa)). Repeat regions lie at residues 7–87 (FTDR…LVRL) and 99–162 (MAPS…IRGT). The NBD1 stretch occupies residues 179 to 428 (LAKFTIDMTA…AVRVARESQP (250 aa)). 224 to 231 (GEPGVGKT) is an ATP binding site. The stretch at 429 to 553 (EIIDSLERKL…AALNAAAAET (125 aa)) forms a coiled coil. Positions 454 to 473 (EASKARLEQAKKDAENVEEE) are disordered. The segment at 562-752 (VGPDQINEIV…IVVMTSNLGA (191 aa)) is NBD2. 635 to 642 (GPSGTGKT) is a binding site for ATP. The segment at 908-927 (EDAVDEVAPESEMDEDLYDD) is disordered.

Belongs to the ClpA/ClpB family. As to quaternary structure, homohexamer, forming a ring with a central pore.

The protein localises to the cytoplasm. Its subcellular location is the nucleus. Required, in concert with Hsp40 and Hsp70 and small Hsps, for the dissociation, resolubilization and refolding of aggregates of damaged proteins after heat or other environmental stresses. Extracts proteins from aggregates by unfolding and threading them in an ATP-dependent process through the axial channel of the protein hexamer, after which they can be refolded by components of the Hsp70/Hsp40 chaperone system. This Neurospora crassa (strain ATCC 24698 / 74-OR23-1A / CBS 708.71 / DSM 1257 / FGSC 987) protein is Heat shock protein hsp98 (hsp98).